We begin with the raw amino-acid sequence, 441 residues long: ATP-dependent protease ATPase subunit HslU (441 aa).

Residues isoleucine 18, 60-65, aspartate 254, glutamate 319, and arginine 391 each bind ATP; that span reads GVGKTE.

It belongs to the ClpX chaperone family. HslU subfamily. In terms of assembly, a double ring-shaped homohexamer of HslV is capped on each side by a ring-shaped HslU homohexamer. The assembly of the HslU/HslV complex is dependent on binding of ATP.

It is found in the cytoplasm. In terms of biological role, ATPase subunit of a proteasome-like degradation complex; this subunit has chaperone activity. The binding of ATP and its subsequent hydrolysis by HslU are essential for unfolding of protein substrates subsequently hydrolyzed by HslV. HslU recognizes the N-terminal part of its protein substrates and unfolds these before they are guided to HslV for hydrolysis. The sequence is that of ATP-dependent protease ATPase subunit HslU from Shewanella piezotolerans (strain WP3 / JCM 13877).